A 356-amino-acid polypeptide reads, in one-letter code: Phenylalanine--tRNA ligase alpha subunit (356 aa).

Mg(2+) is bound at residue E258.

This sequence belongs to the class-II aminoacyl-tRNA synthetase family. Phe-tRNA synthetase alpha subunit type 1 subfamily. Tetramer of two alpha and two beta subunits. The cofactor is Mg(2+).

The protein localises to the cytoplasm. It catalyses the reaction tRNA(Phe) + L-phenylalanine + ATP = L-phenylalanyl-tRNA(Phe) + AMP + diphosphate + H(+). The chain is Phenylalanine--tRNA ligase alpha subunit from Macrococcus caseolyticus (strain JCSC5402) (Macrococcoides caseolyticum).